Reading from the N-terminus, the 79-residue chain is uncharacterized protein (79 aa).

The N-terminal stretch at 1–33 is a signal peptide; sequence MRFIIRTVMLIALVWIGLLLSGYGVLIGSKENA.

This is an uncharacterized protein from Escherichia coli O157:H7.